The sequence spans 818 residues: Myosin-A (818 aa).

Phosphoserine; by PKG is present on Ser19. A Myosin motor domain is found at 97 to 771 (MSFGDIGLLN…GAKILTKIQR (675 aa)). 191-198 (GESGAGKT) lines the ATP pocket. Positions 661–671 (PHFIRCIKPNE) are actin-binding. Residues 773–818 (KLVEWENCVSVIEAAILKHKYKQKVNKNIPSLLRVQAHIRKKMVAQ) form a tail region.

Belongs to the TRAFAC class myosin-kinesin ATPase superfamily. Myosin family. As to quaternary structure, component of the glideosome complex composed of GAP50, GAP45, MTIP and MyoA; the complex is formed during the late schizont stage and in merozoites. MyoA, MTIP and GAP45 probably form an initial complex in the cytoplasm which is then recruited to the outer face of the inner membrane complex via the interaction with GAP50. Interacts with ACT1.

It is found in the cell membrane. Functionally, myosins are actin-based motor molecules with ATPase activity. Unconventional myosins serve in intracellular movements. Their highly divergent tails are presumed to bind to membranous compartments, which would be moved relative to actin filaments. The protein is Myosin-A of Plasmodium falciparum (isolate 3D7).